The chain runs to 664 residues: CRISPR-associated DNA-binding protein Cas12m (664 aa).

A recognition domain (REC1-N) region spans residues 1–137; sequence MKRVTITIDG…AKYRELIGSD (137 aa). Residues 138-212 form a recognition domain (REC2) region; sequence EETAQMDTEI…AAKDRIRAAG (75 aa). The tract at residues 213 to 270 is recognition domain (REC1-C); it reads NDIENLEKDRQAAVIKAYNNSGLWWGNYNAVLESYKKARIKALKDGAELKYHRFDGSG. The tract at residues 271-390 is wedge domain (WED); sequence RFTNQIQGGM…VWSVVFTFTT (120 aa). Positions 391-404 are linker; the sequence is DCPTYDQRSSTGNR. Residues 405-618 are ruvC-I; that stretch reads CGLNLGWKKQ…KNGTQIEQVS (214 aa). The interval 618–650 is target nucleic-acid binding (TNB); sequence STASSATCSACKGKMEQVDGIMWRCRECRALVD. 4 residues coordinate Zn(2+): cysteine 625, cysteine 628, cysteine 642, and cysteine 645. A ruvC-II region spans residues 651–664; sequence QDINAAANLFREVL. Aspartate 652 is a binding site for Mg(2+).

Belongs to the CRISPR-associated DNA-binding protein Cas12m family. The cofactor is Mg(2+). Zn(2+) serves as cofactor.

CRISPR (clustered regularly interspaced short palindromic repeat), is an adaptive immune system that provides protection against mobile genetic elements (viruses, transposable elements and conjugative plasmids). CRISPR clusters contain sequences complementary to antecedent mobile elements and target invading nucleic acids. CRISPR clusters are transcribed and processed into CRISPR RNA (crRNA). Recognizes a short motif in the CRISPR repeat sequences (the 5' PAM or protospacer adjacent motif, 5'-CCN-3' in this organism) to help distinguish self versus nonself, as targets within the bacterial CRISPR locus do not have PAMs. Cas12m-crRNA binds DNA in a PAM-dependent, crRNA-guided fashion. DNA-binding probably inhibits transcription, leading to gene silencing. Upon expression in E.coli as a CRISPR region preferentially binds to its associated crRNA. Probably required for pre-crRNA processing to mature crRNA. The protein is CRISPR-associated DNA-binding protein Cas12m of Pelobacter propionicus (strain DSM 2379 / NBRC 103807 / OttBd1).